The following is a 523-amino-acid chain: GMP synthase [glutamine-hydrolyzing] (523 aa).

One can recognise a Glutamine amidotransferase type-1 domain in the interval 8–205 (KILILDFGSQ…VVNICGCATN (198 aa)). Residue Cys85 is the Nucleophile of the active site. Active-site residues include His179 and Glu181. The GMPS ATP-PPase domain occupies 206-398 (WTPENIIEDA…LGLPAEMLNR (193 aa)). 233 to 239 (SGGVDSS) contributes to the ATP binding site.

Homodimer.

The catalysed reaction is XMP + L-glutamine + ATP + H2O = GMP + L-glutamate + AMP + diphosphate + 2 H(+). The protein operates within purine metabolism; GMP biosynthesis; GMP from XMP (L-Gln route): step 1/1. In terms of biological role, catalyzes the synthesis of GMP from XMP. In Actinobacillus succinogenes (strain ATCC 55618 / DSM 22257 / CCUG 43843 / 130Z), this protein is GMP synthase [glutamine-hydrolyzing].